We begin with the raw amino-acid sequence, 598 residues long: Dihydroxy-acid dehydratase astD, mitochondrial (598 aa).

The N-terminal 111 residues, 1–111 (MFASRIRSRA…HRAGLVPMRF (111 aa)), are a transit peptide targeting the mitochondrion. Positions 23–50 (RLPASTTGRRYKSDETLNRVSSKITQPK) are disordered. Over residues 40–50 (NRVSSKITQPK) the composition is skewed to polar residues. A [2Fe-2S] cluster-binding site is contributed by cysteine 86. Aspartate 118 provides a ligand contact to Mg(2+). Cysteine 159 contacts [2Fe-2S] cluster. Mg(2+) is bound at residue aspartate 160. Cysteine 232 contacts [2Fe-2S] cluster. Residue glutamate 485 participates in Mg(2+) binding. Catalysis depends on serine 511, which acts as the Proton acceptor.

This sequence belongs to the IlvD/Edd family. [2Fe-2S] cluster serves as cofactor. Requires Mg(2+) as cofactor.

The protein resides in the mitochondrion. The catalysed reaction is (2R)-2,3-dihydroxy-3-methylbutanoate = 3-methyl-2-oxobutanoate + H2O. It catalyses the reaction (2R,3R)-2,3-dihydroxy-3-methylpentanoate = (S)-3-methyl-2-oxopentanoate + H2O. Its pathway is amino-acid biosynthesis; L-isoleucine biosynthesis; L-isoleucine from 2-oxobutanoate: step 3/4. It functions in the pathway amino-acid biosynthesis; L-valine biosynthesis; L-valine from pyruvate: step 3/4. With respect to regulation, DHAD activity is not inhibited by the dihydroxyacid dehydratase inhibitor aspterric acid (AA). Functionally, dihydroxyacid dehydratase; part of the gene cluster that mediates the biosynthesis of the sesquiterpenoid aspterric acid (AA), an inhibitor of dihydroxy-acid dehydratase (DHAD) effective as an herbicide. Performs the third step in the common pathway leading to biosynthesis of branched-chain amino acids. Catalyzes the dehydration of (2R,3R)-2,3-dihydroxy-3-methylpentanoate (2,3-dihydroxy-3-methylvalerate) into 2-oxo-3-methylpentanoate (2-oxo-3-methylvalerate) and of (2R)-2,3-dihydroxy-3-methylbutanoate (2,3-dihydroxyisovalerate) into 2-oxo-3-methylbutanoate (2-oxoisovalerate), the penultimate precursor to L-isoleucine and L-valine, respectively. AstD confers self-resistance in the presence of the dihydroxyacid dehydratase inhibitor aspterric acid (AA) produced by the ast cluster. This is Dihydroxy-acid dehydratase astD, mitochondrial from Aspergillus terreus (strain NIH 2624 / FGSC A1156).